Reading from the N-terminus, the 119-residue chain is Fluoride-specific ion channel FluC 2 (119 aa).

2 helical membrane-spanning segments follow: residues 1 to 21 (MIFAVGFGASLGAVARYALTS) and 44 to 64 (GAFFLGLAFALRLPASVYAFL). Residues Gly-70 and Thr-73 each coordinate Na(+). A helical membrane pass occupies residues 98–118 (LLASYLGGAVLLTCGYYLGSL).

The protein belongs to the fluoride channel Fluc/FEX (TC 1.A.43) family.

Its subcellular location is the cell membrane. It carries out the reaction fluoride(in) = fluoride(out). With respect to regulation, na(+) is not transported, but it plays an essential structural role and its presence is essential for fluoride channel function. In terms of biological role, fluoride-specific ion channel. Important for reducing fluoride concentration in the cell, thus reducing its toxicity. The protein is Fluoride-specific ion channel FluC 2 of Lactobacillus delbrueckii subsp. bulgaricus (strain ATCC 11842 / DSM 20081 / BCRC 10696 / JCM 1002 / NBRC 13953 / NCIMB 11778 / NCTC 12712 / WDCM 00102 / Lb 14).